A 229-amino-acid chain; its full sequence is MSSLKKILGLKGKGKKSKKLGIAPPPYEEDTSMEYAPSAPIDKSYFGVDEMDTHDPNQLRYEKFFFTVKMTVRSNRPFRTYSDVAAAVSHWDHMYIGMAGKRPFYKILAFLGSSNLKATPAVLADQGQPEYHAHCEGRAYLPHRMGKTPPMLNVPEHFRRPFNIGLYKGTIELTMTIYDDESLEAAPMIWDHFNSSKFSDFREKALMFGLIVEKKASGAWVLDSVSHFK.

A compositionally biased stretch (low complexity) spans 1 to 10 (MSSLKKILGL). A disordered region spans residues 1–23 (MSSLKKILGLKGKGKKSKKLGIA). Residues 2 to 4 (SSL) carry the dynamin binding motif. Residues 24 to 27 (PPPY) carry the PPXY motif motif. Residues 37-40 (PSAP) carry the PTAP/PSAP motif motif.

The protein belongs to the vesiculoviruses matrix protein family. In terms of assembly, homomultimer. Interacts with viral nucleocapsid; this interaction contributes to the virion assembly. Interacts with the viral envelope glycoprotein; this interaction contributes to the virion assembly. Interacts with host RAE1-NUP98 complex. Interacts with host NEDD4 and TSG101. Interacts with host dynamin. Interacts with host NDUFAF4; the interaction inhibits viral propagation and is independent of interferon activation. Interacts with host GTF2H5; the interaction may inhibit host transcription. Post-translationally, phosphorylated by host.

The protein resides in the virion. Its subcellular location is the host endomembrane system. The protein localises to the host nucleus membrane. It is found in the host nucleus. It localises to the host cytoplasm. Its function is as follows. Forms a double layer around the helical nucleocapsid, the inner matrix layer binding to the N helix and the outer matrix layer binding to the envelope glycoprotein. Plays a major role in assembly and budding of virion, by recruiting cellular partners of the ESCRT complexes that play a key role in releasing the budding particle from the host membrane. Condensates the ribonucleocapsid core during virus assembly. Inhibits the host mRNA nuclear export thereby inducing the shut off of cellular transcription and preventing the interferon signaling and the establishment of antiviral state in infected cells. This shutoff presumably inhibits interferon signaling and thus establishment of antiviral state in virus infected cells. Induces cell-rounding, cytoskeleton disorganization and apoptosis in infected cell. Inhibits host transcription, possibly through interaction with host DNA repair factor IIH/TFIIH GTF2H5 subunit. The protein is Matrix protein (M) of Vesicular stomatitis Indiana virus (strain 85CLB South America) (VSIV).